We begin with the raw amino-acid sequence, 300 residues long: ATP-dependent (S)-NAD(P)H-hydrate dehydratase (300 aa).

The 280-residue stretch at 14–293 (LLTLFKTIVP…NEISAVFRSD (280 aa)) folds into the YjeF C-terminal domain. (6S)-NADPHX contacts are provided by residues G114 and 167 to 173 (NAMEFRR). Residues 198 to 202 (KGVND) and 219 to 228 (GSGRRCGGQG) each bind ATP. Residue D229 participates in (6S)-NADPHX binding.

Belongs to the NnrD/CARKD family. Mg(2+) serves as cofactor.

The catalysed reaction is (6S)-NADHX + ATP = ADP + phosphate + NADH + H(+). It carries out the reaction (6S)-NADPHX + ATP = ADP + phosphate + NADPH + H(+). Functionally, catalyzes the dehydration of the S-form of NAD(P)HX at the expense of ATP, which is converted to ADP. Together with NAD(P)HX epimerase, which catalyzes the epimerization of the S- and R-forms, the enzyme allows the repair of both epimers of NAD(P)HX, a damaged form of NAD(P)H that is a result of enzymatic or heat-dependent hydration. This is ATP-dependent (S)-NAD(P)H-hydrate dehydratase from Drosophila pseudoobscura pseudoobscura (Fruit fly).